Here is a 218-residue protein sequence, read N- to C-terminus: Small ribosomal subunit protein uS3c (218 aa).

Residues 47–118 (VQKNMRISSG…RLNIAITRVA (72 aa)) form the KH type-2 domain.

Belongs to the universal ribosomal protein uS3 family. As to quaternary structure, part of the 30S ribosomal subunit.

It localises to the plastid. It is found in the chloroplast. This Calycanthus floridus var. glaucus (Eastern sweetshrub) protein is Small ribosomal subunit protein uS3c (rps3).